A 188-amino-acid chain; its full sequence is Elongation factor P (188 aa).

This sequence belongs to the elongation factor P family.

The protein resides in the cytoplasm. It functions in the pathway protein biosynthesis; polypeptide chain elongation. Its function is as follows. Involved in peptide bond synthesis. Stimulates efficient translation and peptide-bond synthesis on native or reconstituted 70S ribosomes in vitro. Probably functions indirectly by altering the affinity of the ribosome for aminoacyl-tRNA, thus increasing their reactivity as acceptors for peptidyl transferase. The chain is Elongation factor P from Chlorobium chlorochromatii (strain CaD3).